Here is a 70-residue protein sequence, read N- to C-terminus: Small ribosomal subunit protein bS21B (70 aa).

It belongs to the bacterial ribosomal protein bS21 family.

In Burkholderia thailandensis (strain ATCC 700388 / DSM 13276 / CCUG 48851 / CIP 106301 / E264), this protein is Small ribosomal subunit protein bS21B.